The sequence spans 316 residues: 4-hydroxy-3-methylbut-2-enyl diphosphate reductase (316 aa).

Residue C12 participates in [4Fe-4S] cluster binding. Positions 41 and 74 each coordinate (2E)-4-hydroxy-3-methylbut-2-enyl diphosphate. Dimethylallyl diphosphate is bound by residues H41 and H74. Isopentenyl diphosphate is bound by residues H41 and H74. C96 serves as a coordination point for [4Fe-4S] cluster. H124 lines the (2E)-4-hydroxy-3-methylbut-2-enyl diphosphate pocket. Dimethylallyl diphosphate is bound at residue H124. An isopentenyl diphosphate-binding site is contributed by H124. Residue E126 is the Proton donor of the active site. T167 lines the (2E)-4-hydroxy-3-methylbut-2-enyl diphosphate pocket. Residue C197 coordinates [4Fe-4S] cluster. 4 residues coordinate (2E)-4-hydroxy-3-methylbut-2-enyl diphosphate: S225, S226, N227, and S269. Dimethylallyl diphosphate-binding residues include S225, S226, N227, and S269. Isopentenyl diphosphate is bound by residues S225, S226, N227, and S269.

Belongs to the IspH family. Homodimer. [4Fe-4S] cluster serves as cofactor.

The catalysed reaction is isopentenyl diphosphate + 2 oxidized [2Fe-2S]-[ferredoxin] + H2O = (2E)-4-hydroxy-3-methylbut-2-enyl diphosphate + 2 reduced [2Fe-2S]-[ferredoxin] + 2 H(+). It carries out the reaction dimethylallyl diphosphate + 2 oxidized [2Fe-2S]-[ferredoxin] + H2O = (2E)-4-hydroxy-3-methylbut-2-enyl diphosphate + 2 reduced [2Fe-2S]-[ferredoxin] + 2 H(+). Its pathway is isoprenoid biosynthesis; dimethylallyl diphosphate biosynthesis; dimethylallyl diphosphate from (2E)-4-hydroxy-3-methylbutenyl diphosphate: step 1/1. The protein operates within isoprenoid biosynthesis; isopentenyl diphosphate biosynthesis via DXP pathway; isopentenyl diphosphate from 1-deoxy-D-xylulose 5-phosphate: step 6/6. Functionally, catalyzes the conversion of 1-hydroxy-2-methyl-2-(E)-butenyl 4-diphosphate (HMBPP) into a mixture of isopentenyl diphosphate (IPP) and dimethylallyl diphosphate (DMAPP). Acts in the terminal step of the DOXP/MEP pathway for isoprenoid precursor biosynthesis. The protein is 4-hydroxy-3-methylbut-2-enyl diphosphate reductase of Sodalis glossinidius (strain morsitans).